The chain runs to 639 residues: MSNMDFLPISKEDLKKRNIDVLDFIIVTGDAYVDHPSFGTAIIGRVLEREGFTVGIIAQPNWNNIEDFKKLGKPKYGFLVNSGNIDSMVNHYTASKKKRHDDFYSPGGKSGYRPDRAVIVYCNKIKEAFKDSPIIIGGIEASLRRFAHYDYWDNSVRRSILEDSSADLLIYGMGEKPIVQVSNLLRYGMKIDSIKNVRGTTYIERDISPLKDYIEIPSFEEVSTNKKSYAEAYKIQYYEQDSIRGKTLVQKHKERYVVQNPPQPPLSQEEMDEVYALPYARTYHPMYEAEGGIPAIKEVKFSITSHRGCYGSCSFCALTFHQGRVIQNRSQDSILKEANMMTNMKDFKGYIHDVGGPTANFRHRACKVQEEHGTCKNKQCVFPKACKNLIIDHKEYLSLLKKIRKIPNVKKVFIRSGIRFDYLMYDKNDEFFKELCEHHISGQLKVAPEHISDKVLNLMGKPTRNVYDSFVKKYYDINKKIHKNQFLVPYLMSSHPGSDLKAAIELAQYIKKMGYTPEQVQDFYPTPGSLSTTMYYTGINPLTEEKVYVPKEQKEKRMQRSLLQFSIPDNYDLVKEALIKAHREDLIGNGPDCLIPYNKPYKKSHKKNNAKNKNNNYNKNKDVSKKNKKNSLSKHKKRK.

The Radical SAM core domain occupies 295–566; sequence AIKEVKFSIT…RMQRSLLQFS (272 aa). [4Fe-4S] cluster-binding residues include cysteine 309, cysteine 313, and cysteine 316. Positions 597-639 are disordered; the sequence is YNKPYKKSHKKNNAKNKNNNYNKNKDVSKKNKKNSLSKHKKRK. 2 stretches are compositionally biased toward basic residues: residues 600-610 and 626-639; these read PYKKSHKKNNA and KNKK…KKRK.

Belongs to the UPF0313 family. [4Fe-4S] cluster serves as cofactor.

In Clostridium botulinum (strain 657 / Type Ba4), this protein is UPF0313 protein CLJ_B0249.